Consider the following 740-residue polypeptide: MEHTYQYSWIIPFIPLPVPILLGGGLLLFPTATKNLRRTWSFLSIFLLSIVMIFSLYLSIQQIIISCIHQNVWSWTINNDLSFEFGYFIDPLTCIMLILITTVGILVLIYSDNYMSHDQGYLRFFAYMGFFNTSMLGLVTSSNLIQIYFFWELVGMCSYLLIGFWFTRPIAANACQKAFVTNRVGDFGLLLGILGLYWVTGSFEFQDLFEIFNNLILNNRVNLLFLTLCAFLLFMGPIAKSAQFPLHVWLPDAMEGPTPISALIHAATMVAAGIFLVARLLPLFIVIPSIMYIISLIGIITILLGATLALAQKDIKRGLAYSTMSQLGYMMLALGMGSYRSALFHLITHAYSKALLFLGSGSIIHSMEAIVGYSPDKSQNMILMGGLTKHVPITKTAFLLGTLSLCGIPPLACFWSKDEILTDSLLFSPIFAIIACSTAGLTAFYMFRIYLLTFEGHLNTYFLNYSGKKSSSFYSISLWGKEDEKKINRNFCLVPLLTMNNKKGASFFSKKTYKINNNVRNKTLITVANGALNKRTFYYPHESDNTILFPMLVLLLFTLFIGAIGIPLNQEGFDILSKLFTPSINLLHKNSTNFVDWYEFFRNATFSVSIAFFGIFIAYCLYKPFYSSLLNLTLLNSFQKWSSNPICWEKLINCLYNWSYNRAYIDTFYKKSLTESIRRLAKQIHFFDKRIIDGITNGVGITSFFVAEFTKYIGGSRISSYLFLYLSYVFLFFLFLKILN.

16 helical membrane passes run 9–29, 40–60, 89–109, 125–145, 147–167, 185–205, 221–241, 258–278, 283–303, 327–347, 354–374, 396–416, 425–445, 547–567, 606–626, and 718–738; these read WIIP…LLLF, WSFL…YLSI, IDPL…LVLI, FAYM…SNLI, IYFF…FWFT, GDFG…SFEF, VNLL…IAKS, TPIS…FLVA, LFIV…ITIL, LGYM…FHLI, ALLF…VGYS, TAFL…CFWS, LLFS…TAFY, ILFP…IGIP, FSVS…KPFY, and ISSY…FLKI.

This sequence belongs to the complex I subunit 5 family. As to quaternary structure, NDH is composed of at least 16 different subunits, 5 of which are encoded in the nucleus.

The protein resides in the plastid. Its subcellular location is the chloroplast thylakoid membrane. It carries out the reaction a plastoquinone + NADH + (n+1) H(+)(in) = a plastoquinol + NAD(+) + n H(+)(out). The enzyme catalyses a plastoquinone + NADPH + (n+1) H(+)(in) = a plastoquinol + NADP(+) + n H(+)(out). In terms of biological role, NDH shuttles electrons from NAD(P)H:plastoquinone, via FMN and iron-sulfur (Fe-S) centers, to quinones in the photosynthetic chain and possibly in a chloroplast respiratory chain. The immediate electron acceptor for the enzyme in this species is believed to be plastoquinone. Couples the redox reaction to proton translocation, and thus conserves the redox energy in a proton gradient. The polypeptide is NAD(P)H-quinone oxidoreductase subunit 5, chloroplastic (ndhF) (Aethionema cordifolium (Lebanon stonecress)).